A 361-amino-acid polypeptide reads, in one-letter code: 3-dehydroquinate synthase (361 aa).

It belongs to the archaeal-type DHQ synthase family.

The enzyme catalyses 2-amino-2,3,7-trideoxy-D-lyxo-hept-6-ulosonate + NAD(+) + H2O = 3-dehydroquinate + NH4(+) + NADH + H(+). In terms of biological role, catalyzes the oxidative deamination and cyclization of 2-amino-3,7-dideoxy-D-threo-hept-6-ulosonic acid (ADH) to yield 3-dehydroquinate (DHQ), which is fed into the canonical shikimic pathway of aromatic amino acid biosynthesis. The sequence is that of 3-dehydroquinate synthase from Methanococcus maripaludis (strain C7 / ATCC BAA-1331).